The primary structure comprises 597 residues: uncharacterized protein (597 aa).

Positions 1-23 are enriched in basic and acidic residues; that stretch reads MSHEGSRQARDRGVTRSKAEKAR. Disordered regions lie at residues 1 to 32 and 171 to 192; these read MSHEGSRQARDRGVTRSKAEKARPPTQPVPQV and RESQEPTQSSEPSAEPRVNPRP. A compositionally biased stretch (low complexity) spans 175–186; that stretch reads EPTQSSEPSAEP. Ser-237 and Ser-241 each carry phosphoserine. Disordered stretches follow at residues 302 to 335 and 549 to 569; these read SLLSVPTPDGPSPFLQPGGMERRPSHKTPTMRLD and EAEEGTPQAPEQQPIQTGVSK. Polar residues predominate over residues 557–568; it reads APEQQPIQTGVS.

This is an uncharacterized protein from Rattus norvegicus (Rat).